The chain runs to 395 residues: Probable isocitrate dehydrogenase [NAD] gamma 2, mitochondrial (395 aa).

Residues 1-25 (MLAAGSCSVRTILQPALLLGHSREV) constitute a mitochondrion transit peptide. Citrate is bound at residue threonine 117. Residues arginine 133, arginine 164, and aspartate 251 each contribute to the substrate site. Mn(2+) is bound at residue aspartate 251. Residue asparagine 321 coordinates ADP.

The protein belongs to the isocitrate and isopropylmalate dehydrogenases family. In terms of assembly, heterooligomer of subunits alpha (IDH3A), beta (IDH3B), and gamma (IDH3G) in the apparent ratio of 2:1:1. The heterodimer containing one IDH3A and one IDH3B subunit and the heterodimer containing one IDH3A and one IDH3G subunit assemble into a heterotetramer (which contains two subunits of IDH3A, one of IDH3B and one of IDH3G) and further into the heterooctamer. Mg(2+) is required as a cofactor. Requires Mn(2+) as cofactor.

The protein resides in the mitochondrion. With respect to regulation, the heterotetramer and the heterodimer composed of IDH3A and IDH3G subunits can be allosterically activated by citrate (CIT) or/and ADP, and the two activators can act independently or synergistically. The heterodimer composed of IDH3A and IDH3B subunits cannot be allosterically regulated and the allosteric regulation of the heterotetramer is through the IDH3G subunit and not the IDH3B subunit. The IDH3G subunit contains the allosteric site which consists of a CIT-binding site and an ADP-binding site, and the binding of CIT and ADP causes conformational changes at the allosteric site which are transmitted to the active site in the catalytic subunit (IDH3A) through a cascade of conformational changes at the heterodimer interface, leading to stabilization of the isocitrate-binding at the active site and thus activation of the enzyme. ATP can activate the heterotetramer and the heterodimer composed of IDH3A and IDH3G subunits at low concentrations but inhibits their activities at high concentrations, whereas ATP exhibits only inhibitory effect on the heterodimer composed of IDH3A and IDH3B subunits. Functionally, regulatory subunit which plays a role in the allosteric regulation of the enzyme catalyzing the decarboxylation of isocitrate (ICT) into alpha-ketoglutarate. The heterodimer composed of the alpha (IDH3A) and beta (IDH3B) subunits and the heterodimer composed of the alpha (IDH3A) and gamma (IDH3G) subunits, have considerable basal activity but the full activity of the heterotetramer (containing two subunits of IDH3A, one of IDH3B and one of IDH3G) requires the assembly and cooperative function of both heterodimers. The polypeptide is Probable isocitrate dehydrogenase [NAD] gamma 2, mitochondrial (Rattus norvegicus (Rat)).